The chain runs to 1488 residues: Chromosome partition protein MukB (1488 aa).

34-41 (GGNGAGKS) is an ATP binding site. Coiled coils occupy residues 326 to 418 (LEAD…QYNQ), 444 to 472 (LDTF…QTAH), and 509 to 602 (RHLA…QRAP). Residues 666 to 783 (PGGAEDQRLN…SLPIFGRAAR (118 aa)) are flexible hinge. Coiled coils occupy residues 835 to 923 (EAEI…AKLE), 977 to 1116 (EMLS…AKAG), and 1209 to 1265 (VEAI…LQSV). The interval 1049 to 1074 (ADSGAEERARQRRDELHAQLSNNRSR) is disordered. A compositionally biased stretch (basic and acidic residues) spans 1051-1065 (SGAEERARQRRDELH).

This sequence belongs to the SMC family. MukB subfamily. As to quaternary structure, homodimerization via its hinge domain. Binds to DNA via its C-terminal region. Interacts, and probably forms a ternary complex, with MukE and MukF via its C-terminal region. The complex formation is stimulated by calcium or magnesium. Interacts with tubulin-related protein FtsZ.

The protein localises to the cytoplasm. It localises to the nucleoid. Functionally, plays a central role in chromosome condensation, segregation and cell cycle progression. Functions as a homodimer, which is essential for chromosome partition. Involved in negative DNA supercoiling in vivo, and by this means organize and compact chromosomes. May achieve or facilitate chromosome segregation by condensation DNA from both sides of a centrally located replisome during cell division. In Salmonella arizonae (strain ATCC BAA-731 / CDC346-86 / RSK2980), this protein is Chromosome partition protein MukB.